We begin with the raw amino-acid sequence, 277 residues long: Large ribosomal subunit protein uL2 (277 aa).

The tract at residues 219 to 277 is disordered; the sequence is TVRGSVMNPNDHPHGGGEGRAPIGRKSPMSPWGKPTLGFKTRKKKNKSDKFIVRRRKNK. Residues 258 to 277 are compositionally biased toward basic residues; sequence KTRKKKNKSDKFIVRRRKNK.

This sequence belongs to the universal ribosomal protein uL2 family. In terms of assembly, part of the 50S ribosomal subunit. Forms a bridge to the 30S subunit in the 70S ribosome.

Functionally, one of the primary rRNA binding proteins. Required for association of the 30S and 50S subunits to form the 70S ribosome, for tRNA binding and peptide bond formation. It has been suggested to have peptidyltransferase activity; this is somewhat controversial. Makes several contacts with the 16S rRNA in the 70S ribosome. The polypeptide is Large ribosomal subunit protein uL2 (Bacillus subtilis (strain 168)).